The sequence spans 234 residues: Proteasome subunit alpha (234 aa).

It belongs to the peptidase T1A family. In terms of assembly, the 20S proteasome core is composed of 14 alpha and 14 beta subunits that assemble into four stacked heptameric rings, resulting in a barrel-shaped structure. The two inner rings, each composed of seven catalytic beta subunits, are sandwiched by two outer rings, each composed of seven alpha subunits. The catalytic chamber with the active sites is on the inside of the barrel. Has a gated structure, the ends of the cylinder being occluded by the N-termini of the alpha-subunits. Is capped by the proteasome-associated ATPase, ARC.

It localises to the cytoplasm. Its pathway is protein degradation; proteasomal Pup-dependent pathway. With respect to regulation, the formation of the proteasomal ATPase ARC-20S proteasome complex, likely via the docking of the C-termini of ARC into the intersubunit pockets in the alpha-rings, may trigger opening of the gate for substrate entry. Interconversion between the open-gate and close-gate conformations leads to a dynamic regulation of the 20S proteasome proteolysis activity. Its function is as follows. Component of the proteasome core, a large protease complex with broad specificity involved in protein degradation. This is Proteasome subunit alpha from Acidothermus cellulolyticus (strain ATCC 43068 / DSM 8971 / 11B).